We begin with the raw amino-acid sequence, 431 residues long: Tol-Pal system protein TolB (431 aa).

Residues 1–26 (MSLMTKLGFRALVASCLITAGSAANA) form the signal peptide. Residues 406-431 (DGSAPPQILSVQGGSVREPSWGPFMQ) are disordered.

Belongs to the TolB family. As to quaternary structure, the Tol-Pal system is composed of five core proteins: the inner membrane proteins TolA, TolQ and TolR, the periplasmic protein TolB and the outer membrane protein Pal. They form a network linking the inner and outer membranes and the peptidoglycan layer.

It localises to the periplasm. In terms of biological role, part of the Tol-Pal system, which plays a role in outer membrane invagination during cell division and is important for maintaining outer membrane integrity. The chain is Tol-Pal system protein TolB from Burkholderia orbicola (strain AU 1054).